A 401-amino-acid chain; its full sequence is Cysteine desulfurase (401 aa).

Pyridoxal 5'-phosphate contacts are provided by residues 72–73 (AT), N151, Q179, and 199–201 (SAH). Position 202 is an N6-(pyridoxal phosphate)lysine (K202). T237 is a pyridoxal 5'-phosphate binding site. The active-site Cysteine persulfide intermediate is C324. Position 324 (C324) interacts with [2Fe-2S] cluster.

This sequence belongs to the class-V pyridoxal-phosphate-dependent aminotransferase family. NifS/IscS subfamily. As to quaternary structure, homodimer. Requires pyridoxal 5'-phosphate as cofactor.

It catalyses the reaction (sulfur carrier)-H + L-cysteine = (sulfur carrier)-SH + L-alanine. Catalyzes the removal of elemental sulfur atoms from cysteine to produce alanine. Seems to participate in the biosynthesis of the nitrogenase metalloclusters by providing the inorganic sulfur required for the Fe-S core formation. The polypeptide is Cysteine desulfurase (Enterobacter agglomerans (Erwinia herbicola)).